The sequence spans 214 residues: Probable chemoreceptor glutamine deamidase CheD (214 aa).

It belongs to the CheD family.

The catalysed reaction is L-glutaminyl-[protein] + H2O = L-glutamyl-[protein] + NH4(+). Its function is as follows. Probably deamidates glutamine residues to glutamate on methyl-accepting chemotaxis receptors (MCPs), playing an important role in chemotaxis. The sequence is that of Probable chemoreceptor glutamine deamidase CheD from Vibrio vulnificus (strain CMCP6).